Consider the following 1004-residue polypeptide: UPF0182 protein Noca_1530 (1004 aa).

Residues 1-20 are disordered; it reads MSELFDEAPRDPGPPARSGS. Helical transmembrane passes span 26–46, 71–91, 120–140, 183–203, 212–232, 261–281, and 293–313; these read LIVT…FAGI, VLFF…IYLA, TWLL…SAIG, MAVL…YGGI, LSGA…LAKA, VLPA…LFFV, and VGLA…PGIV. Disordered stretches follow at residues 899–924 and 974–1004; these read GVST…PPAT and LGQK…SPSS. 2 stretches are compositionally biased toward low complexity: residues 903–916 and 979–1004; these read GPGT…QPGD and GSAG…SPSS.

Belongs to the UPF0182 family.

Its subcellular location is the cell membrane. This Nocardioides sp. (strain ATCC BAA-499 / JS614) protein is UPF0182 protein Noca_1530.